Reading from the N-terminus, the 157-residue chain is SsrA-binding protein (157 aa).

The segment at 131–157 (KQLHDKRDTEKKRDWSREKGRIMRARG) is disordered. The span at 132 to 151 (QLHDKRDTEKKRDWSREKGR) shows a compositional bias: basic and acidic residues.

This sequence belongs to the SmpB family.

The protein resides in the cytoplasm. Required for rescue of stalled ribosomes mediated by trans-translation. Binds to transfer-messenger RNA (tmRNA), required for stable association of tmRNA with ribosomes. tmRNA and SmpB together mimic tRNA shape, replacing the anticodon stem-loop with SmpB. tmRNA is encoded by the ssrA gene; the 2 termini fold to resemble tRNA(Ala) and it encodes a 'tag peptide', a short internal open reading frame. During trans-translation Ala-aminoacylated tmRNA acts like a tRNA, entering the A-site of stalled ribosomes, displacing the stalled mRNA. The ribosome then switches to translate the ORF on the tmRNA; the nascent peptide is terminated with the 'tag peptide' encoded by the tmRNA and targeted for degradation. The ribosome is freed to recommence translation, which seems to be the essential function of trans-translation. In Rhodopseudomonas palustris (strain BisB18), this protein is SsrA-binding protein.